A 458-amino-acid polypeptide reads, in one-letter code: tRNA modification GTPase MnmE (458 aa).

R22, E84, and R123 together coordinate (6S)-5-formyl-5,6,7,8-tetrahydrofolate. Residues 220 to 379 (GISTAIIGRP…LEKAIADLFF (160 aa)) enclose the TrmE-type G domain. N230 provides a ligand contact to K(+). Residues 230-235 (NVGKSS), 249-255 (TDIAGTT), and 274-277 (DTAG) contribute to the GTP site. S234 provides a ligand contact to Mg(2+). 3 residues coordinate K(+): T249, I251, and T254. T255 contacts Mg(2+). Residue K458 coordinates (6S)-5-formyl-5,6,7,8-tetrahydrofolate.

The protein belongs to the TRAFAC class TrmE-Era-EngA-EngB-Septin-like GTPase superfamily. TrmE GTPase family. Homodimer. Heterotetramer of two MnmE and two MnmG subunits. K(+) is required as a cofactor.

The protein resides in the cytoplasm. In terms of biological role, exhibits a very high intrinsic GTPase hydrolysis rate. Involved in the addition of a carboxymethylaminomethyl (cmnm) group at the wobble position (U34) of certain tRNAs, forming tRNA-cmnm(5)s(2)U34. This chain is tRNA modification GTPase MnmE, found in Bacillus mycoides (strain KBAB4) (Bacillus weihenstephanensis).